Here is a 350-residue protein sequence, read N- to C-terminus: MRVTNRSLRGREGEIAITAETLDDLWHLKYIIEKGDLVFALTKRKADSASDKLRPEKVEKVKVRLGIRVEEMEFHKFANRLRIHGPIEHGMDVGSYHTLNVEIGTNISIIKERWKNDQLQRIQDAEEAGKRPKVVIVAVEEGDADIGFVRHYGIEVYSHIRQSSGKRENGLRSEFFREIVDQLRHAVPEDASIVIAGPGFTKEDFLKYFHETEPEMASKALTEDTSMIGMSGFQEVLRRGAVDRIMQESRIARESSLMEDLLREISMDGKAAYGFADVKNALKYGAVETLLIADETLREGREKGEDIDKVLMEVEQAQGKVVVFSTAFEPGEKLHKLGGVAALLRFKVTG.

It belongs to the eukaryotic release factor 1 family. Pelota subfamily. Monomer. Requires a divalent metal cation as cofactor.

It localises to the cytoplasm. In terms of biological role, may function in recognizing stalled ribosomes, interact with stem-loop structures in stalled mRNA molecules, and effect endonucleolytic cleavage of the mRNA. May play a role in the release non-functional ribosomes and degradation of damaged mRNAs. Has endoribonuclease activity. The chain is Protein pelota homolog from Methanosarcina acetivorans (strain ATCC 35395 / DSM 2834 / JCM 12185 / C2A).